We begin with the raw amino-acid sequence, 473 residues long: MTTPAITKTRFAPSPTGFLHVGGARTALYSWLQARANNGEFVLRIEDTDIERSTQAACDAILDGMNWLGLTWDEGPYYQTKRFDRYHEIIGQMLEKGTAYKCYCSRERIETMREEQAAAGLQQKYDGHCRNLAARETNEPFVIRFKNPLEGSVVFDDHVRGRIEISNEMLDDLIIQRTDGVPTYNFCVVVDDWDMGITSVVRGEDHINNTPRQINILKALGAPIPEYAHVSMILGDDGAKLSKRHGAVGVMQYRDDGYLPEALLNYLVRLGWSHGDQEIFSMEEMKQHFKLGDINKAASAFNTDKLIWLNQHYIKTLDPEYVASHLAWHMEDQNIDTSNGPALAEIVTALSERAKTLKELAESSRYFFEDFTDFDEVQAKKHLRGVALEPLTLVKTKLAALTEWSVSVIHQVIEDTATELEVGMGKVGMPLRVAVTGAGQSPALDLTLFLIGKDRSEQRISKAIDFVADRINS.

Residues 13 to 23 (PSPTGFLHVGG) carry the 'HIGH' region motif. The short motif at 240–244 (KLSKR) is the 'KMSKS' region element. An ATP-binding site is contributed by lysine 243.

The protein belongs to the class-I aminoacyl-tRNA synthetase family. Glutamate--tRNA ligase type 1 subfamily. Monomer.

It localises to the cytoplasm. The enzyme catalyses tRNA(Glu) + L-glutamate + ATP = L-glutamyl-tRNA(Glu) + AMP + diphosphate. Catalyzes the attachment of glutamate to tRNA(Glu) in a two-step reaction: glutamate is first activated by ATP to form Glu-AMP and then transferred to the acceptor end of tRNA(Glu). This Shewanella denitrificans (strain OS217 / ATCC BAA-1090 / DSM 15013) protein is Glutamate--tRNA ligase.